The chain runs to 333 residues: Glycerol-3-phosphate dehydrogenase [NAD(P)+] (333 aa).

Residues W15 and K108 each contribute to the NADPH site. Sn-glycerol 3-phosphate is bound by residues K108, G136, and S138. A140 lines the NADPH pocket. Sn-glycerol 3-phosphate contacts are provided by K191, D244, S254, R255, and N256. K191 functions as the Proton acceptor in the catalytic mechanism. R255 serves as a coordination point for NADPH. NADPH is bound by residues V279 and E281.

It belongs to the NAD-dependent glycerol-3-phosphate dehydrogenase family.

The protein resides in the cytoplasm. It catalyses the reaction sn-glycerol 3-phosphate + NAD(+) = dihydroxyacetone phosphate + NADH + H(+). The enzyme catalyses sn-glycerol 3-phosphate + NADP(+) = dihydroxyacetone phosphate + NADPH + H(+). The protein operates within membrane lipid metabolism; glycerophospholipid metabolism. Its function is as follows. Catalyzes the reduction of the glycolytic intermediate dihydroxyacetone phosphate (DHAP) to sn-glycerol 3-phosphate (G3P), the key precursor for phospholipid synthesis. The protein is Glycerol-3-phosphate dehydrogenase [NAD(P)+] of Maricaulis maris (strain MCS10) (Caulobacter maris).